The sequence spans 338 residues: SPbeta prophage-derived uncharacterized protein YonB (338 aa).

This chain is SPbeta prophage-derived uncharacterized protein YonB (yonB), found in Bacillus subtilis (strain 168).